The following is a 60-amino-acid chain: Protein YoaG (60 aa).

Homodimer.

The protein is Protein YoaG (yoaG) of Escherichia coli O157:H7.